A 276-amino-acid polypeptide reads, in one-letter code: Pyrroline-5-carboxylate reductase (276 aa).

This sequence belongs to the pyrroline-5-carboxylate reductase family.

The protein resides in the cytoplasm. The catalysed reaction is L-proline + NADP(+) = (S)-1-pyrroline-5-carboxylate + NADPH + 2 H(+). It carries out the reaction L-proline + NAD(+) = (S)-1-pyrroline-5-carboxylate + NADH + 2 H(+). It participates in amino-acid biosynthesis; L-proline biosynthesis; L-proline from L-glutamate 5-semialdehyde: step 1/1. In Arabidopsis thaliana (Mouse-ear cress), this protein is Pyrroline-5-carboxylate reductase (PROC1).